Consider the following 726-residue polypeptide: tRNA endonuclease ANKZF1 (726 aa).

Residues 40–61 form a disordered region; it reads LARAPRTSCSGSGERESPERKL. Residues 52-61 show a composition bias toward basic and acidic residues; it reads GERESPERKL. Residues 72–96 form a C2H2-type zinc finger; it reads LFCSTCDQTFQNHQEQREHYKLDWH. Residues 120 to 130 show a composition bias toward low complexity; sequence STGDLSSISGS. A disordered region spans residues 120-141; it reads STGDLSSISGSEDSDSASEEDL. The segment covering 131–141 has biased composition (acidic residues); it reads EDSDSASEEDL. The VLRF1 domain occupies 203–346; sequence GPRDCVVLMA…QRVLHKLTTL (144 aa). Glutamine 246 is a catalytic residue. Phosphoserine is present on residues serine 258, serine 361, and serine 398. Disordered stretches follow at residues 387–409 and 436–474; these read DEKE…EGED and RRRR…SSQA. Positions 436–445 are enriched in basic residues; sequence RRRRKRNKKE. Positions 457-473 are enriched in low complexity; the sequence is TLLQQTQEEEPSTQSSQ. The ANK 1 repeat unit spans residues 493-526; sequence ELWNALLAACRAGDVGVLKLQLAPSPADPRVLSL. Serine 533 is subject to Phosphoserine. The stretch at 534 to 563 is one ANK 2 repeat; the sequence is GGFTLLHAAAAAGRGSVVRLLLEAGADPTV. The segment at 588-656 is disordered; it reads MEKNPDAYDY…RRFAALSDRE (69 aa). The residue at position 607 (threonine 607) is a Phosphothreonine. The stretch at 609-659 forms a coiled coil; it reads EMEARQATRKREQKAARRQREEQQQRQQEQEEREREEQRRFAALSDREKRA. Residues 610-656 show a composition bias toward basic and acidic residues; the sequence is MEARQATRKREQKAARRQREEQQQRQQEQEEREREEQRRFAALSDRE. The VCP/p97-interacting motif (VIM) stretch occupies residues 654-666; sequence DREKRALAAERRL. Residues serine 675 and serine 680 each carry the phosphoserine modification.

It belongs to the ANKZF1/VMS1 family. Interacts (via VIM motif) with VCP.

It localises to the cytoplasm. In terms of biological role, endonuclease that cleaves polypeptidyl-tRNAs downstream of the ribosome-associated quality control (RQC) pathway to release incompletely synthesized polypeptides for degradation. The RQC pathway disassembles aberrantly stalled translation complexes to recycle or degrade the constituent parts. ANKZF1 acts downstream disassembly of stalled ribosomes and specifically cleaves off the terminal 3'-CCA nucleotides universal to all tRNAs from polypeptidyl-tRNAs, releasing (1) ubiquitinated polypeptides from 60S ribosomal subunit for degradation and (2) cleaved tRNAs. ANKZF1-cleaved tRNAs are then repaired and recycled by ELAC1 and TRNT1. Also plays a role in the cellular response to hydrogen peroxide and in the maintenance of mitochondrial integrity under conditions of cellular stress. In Homo sapiens (Human), this protein is tRNA endonuclease ANKZF1.